The primary structure comprises 113 residues: Large ribosomal subunit protein eL34 (113 aa).

The protein belongs to the eukaryotic ribosomal protein eL34 family.

The chain is Large ribosomal subunit protein eL34 from Methanopyrus kandleri (strain AV19 / DSM 6324 / JCM 9639 / NBRC 100938).